Here is a 25-residue protein sequence, read N- to C-terminus: Putative cytochrome c4 (25 aa).

Residues 1-25 (QEDIEAGKQKSATCTACHGQEGNST) form a disordered region. Heme-binding residues include Cys-14 and Cys-17.

Post-translationally, binds 2 heme groups per subunit.

The protein localises to the periplasm. Its function is as follows. Diheme, high potential cytochrome c believed to be an intermediate electron donor to terminal oxidation systems. In Aliivibrio fischeri (Vibrio fischeri), this protein is Putative cytochrome c4.